The following is a 98-amino-acid chain: Small ribosomal subunit protein eS24 (98 aa).

Belongs to the eukaryotic ribosomal protein eS24 family.

In Thermococcus sibiricus (strain DSM 12597 / MM 739), this protein is Small ribosomal subunit protein eS24.